A 732-amino-acid chain; its full sequence is Elongation factor 2 (732 aa).

Positions 19–260 constitute a tr-type G domain; sequence ERIRNIGIAA…MVVRHLPSPI (242 aa). Residues 28-35, 94-98, and 148-151 contribute to the GTP site; these read AHIDHGKT, DTPGH, and NKVD. Position 597 is a diphthamide (His-597).

This sequence belongs to the TRAFAC class translation factor GTPase superfamily. Classic translation factor GTPase family. EF-G/EF-2 subfamily.

The protein localises to the cytoplasm. In terms of biological role, catalyzes the GTP-dependent ribosomal translocation step during translation elongation. During this step, the ribosome changes from the pre-translocational (PRE) to the post-translocational (POST) state as the newly formed A-site-bound peptidyl-tRNA and P-site-bound deacylated tRNA move to the P and E sites, respectively. Catalyzes the coordinated movement of the two tRNA molecules, the mRNA and conformational changes in the ribosome. This chain is Elongation factor 2 (fusA), found in Pyrococcus furiosus (strain ATCC 43587 / DSM 3638 / JCM 8422 / Vc1).